Here is a 125-residue protein sequence, read N- to C-terminus: Photoactive yellow protein (125 aa).

The 64-residue stretch at 23 to 86 (LNQLAFGAIQ…GRFKEGVANG (64 aa)) folds into the PAS domain. The residue at position 69 (Cys69) is an S-(4-hydroxycinnamyl)cysteine.

It belongs to the photoactive yellow protein family. Post-translationally, the 4-hydroxycinnamic acid (p-coumaric acid) chromophore is covalently bound via a thioester linkage.

Functionally, photoactive blue light protein. Probably functions as a photoreceptor for a negative phototaxis response. The sequence is that of Photoactive yellow protein (pyp) from Halochromatium salexigens (Chromatium salexigens).